The chain runs to 983 residues: Serine/threonine-protein kinase N2 (983 aa).

An REM-1 1 domain is found at 33-109 (KLDFSDTMVQ…LQELNAHIVV (77 aa)). Position 77 is an N6-acetyllysine (Lys77). The interval 107 to 135 (IVVSDPEDSTDCPRTPDTPNSDSRSSTSN) is disordered. Phosphoserine is present on Ser110. 2 positions are modified to phosphothreonine: Thr121 and Thr124. Positions 121–135 (TPDTPNSDSRSSTSN) are enriched in low complexity. 2 REM-1 domains span residues 121-203 (TPDT…TNEL) and 204-284 (AFDN…ELPR). Residues Ser301, Ser305, Ser359, and Ser361 each carry the phosphoserine modification. Residues 351 to 382 (TSVALPGWSPSDNRSSFMSRTSKSKSGSSRNL) form a disordered region. The C2 domain occupies 352–472 (SVALPGWSPS…LYLEPQGTLF (121 aa)). The segment covering 364–380 (RSSFMSRTSKSKSGSSR) has biased composition (low complexity). A necessary to rescue apical junction formation region spans residues 381–462 (NLLKTDDLSN…FLDNQRHGMC (82 aa)). A phosphoserine mark is found at Ser534, Ser582, Ser619, and Ser630. A disordered region spans residues 553–588 (LAPPASDSTVTKLDFDLEPEPPPAPPRASSLGETDE). One can recognise a Protein kinase domain in the interval 656–915 (FRCCAVLGRG…AEDVKKHPFF (260 aa)). ATP contacts are provided by residues 662–670 (LGRGHFGKV) and Lys685. Asp781 (proton acceptor) is an active-site residue. Thr815 is modified (phosphothreonine; by PDPK1). The segment at 916–976 (RLTDWSALMD…EEEQEMFHDF (61 aa)) is necessary for the catalytic activity. The AGC-kinase C-terminal domain maps to 916–983 (RLTDWSALMD…HDFDYVADWC (68 aa)). Ser951 bears the Phosphoserine mark. Thr957 is subject to Phosphothreonine. Residues 977–983 (DYVADWC) are negatively regulates the responsiveness of the catalytic activity by cardiolipin and is required for optimal activation by the GTP-bound RhoA.

Belongs to the protein kinase superfamily. AGC Ser/Thr protein kinase family. PKC subfamily. In terms of assembly, interacts (via the REM repeats) with RHOA (GTP-bound form preferentially) and interacts (via the REM repeats) with RAC1 (GTP-bound form preferentially); the interactions induce its autophosphorylation. Interacts with NCK1 (via SH3 domains). Interacts with RHOC. Interacts with NCK1 and NCK2. Interacts with CD44. Interacts (via C-terminal kinase domain) with PDPK1; the interaction stimulates PDPK1 kinase activity. Interacts with MAP3K2; the interaction activates PRK2 kinase activity in a MAP3K2-independent kinase activity. Interacts (via C-terminal domain) with AKT1; the interaction occurs with the C-terminal cleavage product of PRK2 in apoptotic cells. Interacts (via C-terminus) with PTPN13 (via PDZ 3 domain). Interacts with CDK10. Post-translationally, phosphorylated during mitosis. Autophosphorylated. Phosphorylated. Phosphorylated by CDK10. Activated by limited proteolysis with trypsin. Proteolytically cleaved by caspase-3 during the induction of apoptotic cell death. In terms of tissue distribution, ubiquitous. Highly expressed in liver and lung Expressed in astrocytes (at protein level). Ubiquitous.

The protein resides in the cytoplasm. The protein localises to the nucleus. It is found in the membrane. Its subcellular location is the cell projection. It localises to the lamellipodium. The protein resides in the cytoskeleton. The protein localises to the cleavage furrow. It is found in the midbody. Its subcellular location is the cell junction. The enzyme catalyses L-seryl-[protein] + ATP = O-phospho-L-seryl-[protein] + ADP + H(+). It catalyses the reaction L-threonyl-[protein] + ATP = O-phospho-L-threonyl-[protein] + ADP + H(+). With respect to regulation, kinase activity is activated upon binding to GTP-bound Rho1/Rac1 GTPases. Activated by caspase-3 (CASP3) cleavage during apoptosis. Activated by lipids, particularly cardiolipin and to a lesser extent by other acidic phospholipids and unsaturated fatty acids. Two specific sites, Thr-815 (activation loop of the kinase domain) and Thr-957 (turn motif), need to be phosphorylated for its full activation. Functionally, PKC-related serine/threonine-protein kinase and Rho/Rac effector protein that participates in specific signal transduction responses in the cell. Plays a role in the regulation of cell cycle progression, actin cytoskeleton assembly, cell migration, cell adhesion, tumor cell invasion and transcription activation signaling processes. Phosphorylates CTTN in hyaluronan-induced astrocytes and hence decreases CTTN ability to associate with filamentous actin. Phosphorylates HDAC5, therefore lead to impair HDAC5 import. Direct RhoA target required for the regulation of the maturation of primordial junctions into apical junction formation in bronchial epithelial cells. Required for G2/M phases of the cell cycle progression and abscission during cytokinesis in a ECT2-dependent manner. Stimulates FYN kinase activity that is required for establishment of skin cell-cell adhesion during keratinocytes differentiation. Regulates epithelial bladder cells speed and direction of movement during cell migration and tumor cell invasion. Inhibits Akt pro-survival-induced kinase activity. Mediates Rho protein-induced transcriptional activation via the c-fos serum response factor (SRF). Involved in the negative regulation of ciliogenesis. The chain is Serine/threonine-protein kinase N2 (Pkn2) from Mus musculus (Mouse).